A 682-amino-acid polypeptide reads, in one-letter code: Nephrocystin-1-like protein (682 aa).

The stretch at 10-100 forms a coiled coil; sequence LQDAINRFPQ…ALSPEKEQLS (91 aa). Residues 96-188 are disordered; the sequence is KEQLSFSVSV…PLESKTLNER (93 aa). Over residues 128–148 the composition is skewed to acidic residues; that stretch reads NDDESEDSDNDSEIIETDVQL. The region spanning 215–275 is the SH3 domain; sequence VRGNVFVAID…PKTYLQHVKE (61 aa).

The protein belongs to the nephrocystin-1 family. Expressed in ciliated sensory neurons of the head (amphid neurons) and the tail in hermaphrodites (phasmid neurons) and males (sensory ray neurons).

Plays a role in the extension of dendrites from phasmid ciliated sensory neurons. May be necessary for initial assembly of the cilium. The chain is Nephrocystin-1-like protein from Caenorhabditis elegans.